A 72-amino-acid polypeptide reads, in one-letter code: MPFGLGLPEILVIGVIALLIFGPKKLPEMGSALGKAIRGFKSGVSDEPAPQQSASKETAPNPPQSLPSGKDS.

Residues 1-21 traverse the membrane as a helical segment; that stretch reads MPFGLGLPEILVIGVIALLIF. The tract at residues 41–72 is disordered; the sequence is KSGVSDEPAPQQSASKETAPNPPQSLPSGKDS.

The protein belongs to the TatA/E family. In terms of assembly, forms a complex with TatC.

The protein localises to the cell inner membrane. Functionally, part of the twin-arginine translocation (Tat) system that transports large folded proteins containing a characteristic twin-arginine motif in their signal peptide across membranes. TatA could form the protein-conducting channel of the Tat system. The polypeptide is Sec-independent protein translocase protein TatA (Gloeobacter violaceus (strain ATCC 29082 / PCC 7421)).